The chain runs to 1366 residues: DNA-directed RNA polymerase subunit beta' (1366 aa).

Positions 1–20 are enriched in basic residues; the sequence is MTSSKPKKTSRVRKTTKNSK. The disordered stretch occupies residues 1-37; it reads MTSSKPKKTSRVRKTTKNSKKNNPVTMPVLPKTPPSF. Zn(2+) contacts are provided by cysteine 248, cysteine 315, cysteine 322, and cysteine 325. The interval 1292 to 1366 is disordered; that stretch reads TVDMPQSPAV…LQEEGLLSDE (75 aa). The span at 1354–1366 shows a compositional bias: low complexity; the sequence is LEGLQEEGLLSDE.

Belongs to the RNA polymerase beta' chain family. RpoC2 subfamily. As to quaternary structure, in cyanobacteria the RNAP catalytic core is composed of 2 alpha, 1 beta, 1 beta', 1 gamma and 1 omega subunit. When a sigma factor is associated with the core the holoenzyme is formed, which can initiate transcription. The cofactor is Zn(2+).

It carries out the reaction RNA(n) + a ribonucleoside 5'-triphosphate = RNA(n+1) + diphosphate. Functionally, DNA-dependent RNA polymerase catalyzes the transcription of DNA into RNA using the four ribonucleoside triphosphates as substrates. In Prochlorococcus marinus (strain MIT 9215), this protein is DNA-directed RNA polymerase subunit beta'.